An 83-amino-acid polypeptide reads, in one-letter code: MKASMFLALAGLVLLFVVGYASESEEKEFPRELLSKVFAVDDFKGEERGCKGFGDSCTPGKNECCPNYACSSKHKWCKVYLGK.

The first 21 residues, 1 to 21 (MKASMFLALAGLVLLFVVGYA), serve as a signal peptide directing secretion. Positions 22–48 (SESEEKEFPRELLSKVFAVDDFKGEER) are excised as a propeptide. 3 cysteine pairs are disulfide-bonded: cysteine 50/cysteine 65, cysteine 57/cysteine 70, and cysteine 64/cysteine 77. Leucine 81 is subject to Leucine amide.

The protein belongs to the neurotoxin 10 (Hwtx-1) family. 15 (Hntx-3) subfamily. As to quaternary structure, monomer. In terms of tissue distribution, expressed by the venom gland.

It localises to the secreted. Its function is as follows. Selective antagonist of neuronal tetrodotoxin (TTX)-sensitive voltage-gated sodium channels (IC(50)=1270 nM on Nav1.1/SCN1A, 270 nM on Nav1.2/SCN2A, 491 nM on Nav1.3/SCN3A and 232 nM on Nav1.7/SCN9A). This toxin suppress Nav1.7 current amplitude without significantly altering the activation, inactivation, and repriming kinetics. Short extreme depolarizations partially activate the toxin-bound channel, indicating voltage-dependent inhibition of this toxin. This toxin increases the deactivation of the Nav1.7 current after extreme depolarizations. The toxin-Nav1.7 complex is gradually dissociated upon prolonged strong depolarizations in a voltage-dependent manner, and the unbound toxin rebinds to Nav1.7 after a long repolarization. Moreover, analysis of chimeric channels showed that the DIIS3-S4 linker is critical for toxin binding to Nav1.7. These data are consistent with this toxin interacting with Nav1.7 site 4 and trapping the domain II voltage sensor in the closed state. The protein is Hainantoxin-III 7 of Cyriopagopus hainanus (Chinese bird spider).